Reading from the N-terminus, the 279-residue chain is Type III pantothenate kinase (279 aa).

Asp-6–Lys-13 contributes to the ATP binding site. Substrate contacts are provided by residues Tyr-92 and Gly-99–Arg-102. Residue Asp-101 is the Proton acceptor of the active site. K(+) is bound at residue Asp-120. Ser-123 is a binding site for ATP. Residue Thr-177 participates in substrate binding.

It belongs to the type III pantothenate kinase family. In terms of assembly, homodimer. NH4(+) is required as a cofactor. It depends on K(+) as a cofactor.

The protein localises to the cytoplasm. The enzyme catalyses (R)-pantothenate + ATP = (R)-4'-phosphopantothenate + ADP + H(+). Its pathway is cofactor biosynthesis; coenzyme A biosynthesis; CoA from (R)-pantothenate: step 1/5. Catalyzes the phosphorylation of pantothenate (Pan), the first step in CoA biosynthesis. In Chromohalobacter salexigens (strain ATCC BAA-138 / DSM 3043 / CIP 106854 / NCIMB 13768 / 1H11), this protein is Type III pantothenate kinase.